Here is a 343-residue protein sequence, read N- to C-terminus: Ribonucleoside-diphosphate reductase small subunit (343 aa).

D101, E131, and H134 together coordinate Fe cation. Y138 is an active-site residue. The chain crosses the membrane as a helical span at residues 188-208 (ILMILIEGIFFSASFAAIAYL). Fe cation-binding residues include E194, E228, and H231.

It belongs to the ribonucleoside diphosphate reductase small chain family. Heterotetramer composed of a homodimer of the large subunit (R1) and a homodimer of the small subunit (R2). Larger multisubunit protein complex are also active, composed of (R1)n(R2)n. Requires Fe cation as cofactor.

The protein localises to the host membrane. It carries out the reaction a 2'-deoxyribonucleoside 5'-diphosphate + [thioredoxin]-disulfide + H2O = a ribonucleoside 5'-diphosphate + [thioredoxin]-dithiol. Its function is as follows. Ribonucleoside-diphosphate reductase holoenzyme provides the precursors necessary for viral DNA synthesis. Allows virus growth in non-dividing cells, as well as reactivation from latency in infected hosts. Catalyzes the biosynthesis of deoxyribonucleotides from the corresponding ribonucleotides. The chain is Ribonucleoside-diphosphate reductase small subunit from Gallid herpesvirus 2 (strain Chicken/Md5/ATCC VR-987) (GaHV-2).